The sequence spans 466 residues: Glutamate--tRNA ligase 1 (466 aa).

Residues 10–20 (PSPTGLIHLGN) carry the 'HIGH' region motif. The Zn(2+) site is built by C103, C105, C130, and H132. The short motif at 247–251 (PLSKR) is the 'KMSKS' region element. ATP is bound at residue K250.

It belongs to the class-I aminoacyl-tRNA synthetase family. Glutamate--tRNA ligase type 1 subfamily. In terms of assembly, monomer. It depends on Zn(2+) as a cofactor.

The protein localises to the cytoplasm. The enzyme catalyses tRNA(Glu) + L-glutamate + ATP = L-glutamyl-tRNA(Glu) + AMP + diphosphate. Functionally, catalyzes the attachment of glutamate to tRNA(Glu) in a two-step reaction: glutamate is first activated by ATP to form Glu-AMP and then transferred to the acceptor end of tRNA(Glu). The protein is Glutamate--tRNA ligase 1 of Methylococcus capsulatus (strain ATCC 33009 / NCIMB 11132 / Bath).